Reading from the N-terminus, the 420-residue chain is Serine hydroxymethyltransferase (420 aa).

(6S)-5,6,7,8-tetrahydrofolate contacts are provided by residues L121 and 125-127; that span reads GHL. At K230 the chain carries N6-(pyridoxal phosphate)lysine. 355–357 is a binding site for (6S)-5,6,7,8-tetrahydrofolate; sequence SPF.

The protein belongs to the SHMT family. Homodimer. It depends on pyridoxal 5'-phosphate as a cofactor.

The protein resides in the cytoplasm. It carries out the reaction (6R)-5,10-methylene-5,6,7,8-tetrahydrofolate + glycine + H2O = (6S)-5,6,7,8-tetrahydrofolate + L-serine. Its pathway is one-carbon metabolism; tetrahydrofolate interconversion. It participates in amino-acid biosynthesis; glycine biosynthesis; glycine from L-serine: step 1/1. In terms of biological role, catalyzes the reversible interconversion of serine and glycine with tetrahydrofolate (THF) serving as the one-carbon carrier. This reaction serves as the major source of one-carbon groups required for the biosynthesis of purines, thymidylate, methionine, and other important biomolecules. Also exhibits THF-independent aldolase activity toward beta-hydroxyamino acids, producing glycine and aldehydes, via a retro-aldol mechanism. The chain is Serine hydroxymethyltransferase from Streptococcus gordonii (strain Challis / ATCC 35105 / BCRC 15272 / CH1 / DL1 / V288).